Here is a 253-residue protein sequence, read N- to C-terminus: UPF0280 protein MA_1715 (253 aa).

This sequence belongs to the UPF0280 family.

The sequence is that of UPF0280 protein MA_1715 from Methanosarcina acetivorans (strain ATCC 35395 / DSM 2834 / JCM 12185 / C2A).